We begin with the raw amino-acid sequence, 418 residues long: Light-independent protochlorophyllide reductase subunit N (418 aa).

The [4Fe-4S] cluster site is built by C17, C42, and C103.

The protein belongs to the BchN/ChlN family. In terms of assembly, protochlorophyllide reductase is composed of three subunits; ChlL, ChlN and ChlB. Forms a heterotetramer of two ChlB and two ChlN subunits. Requires [4Fe-4S] cluster as cofactor.

It catalyses the reaction chlorophyllide a + oxidized 2[4Fe-4S]-[ferredoxin] + 2 ADP + 2 phosphate = protochlorophyllide a + reduced 2[4Fe-4S]-[ferredoxin] + 2 ATP + 2 H2O. It functions in the pathway porphyrin-containing compound metabolism; chlorophyll biosynthesis (light-independent). Functionally, component of the dark-operative protochlorophyllide reductase (DPOR) that uses Mg-ATP and reduced ferredoxin to reduce ring D of protochlorophyllide (Pchlide) to form chlorophyllide a (Chlide). This reaction is light-independent. The NB-protein (ChlN-ChlB) is the catalytic component of the complex. The protein is Light-independent protochlorophyllide reductase subunit N of Prochlorococcus marinus (strain MIT 9312).